The following is a 162-amino-acid chain: Endoribonuclease YbeY (162 aa).

The Zn(2+) site is built by histidine 128, histidine 132, and histidine 138.

It belongs to the endoribonuclease YbeY family. The cofactor is Zn(2+).

It is found in the cytoplasm. Single strand-specific metallo-endoribonuclease involved in late-stage 70S ribosome quality control and in maturation of the 3' terminus of the 16S rRNA. The chain is Endoribonuclease YbeY from Levilactobacillus brevis (strain ATCC 367 / BCRC 12310 / CIP 105137 / JCM 1170 / LMG 11437 / NCIMB 947 / NCTC 947) (Lactobacillus brevis).